Here is a 155-residue protein sequence, read N- to C-terminus: 6,7-dimethyl-8-ribityllumazine synthase (155 aa).

5-amino-6-(D-ribitylamino)uracil is bound by residues Phe-24, 58–60 (AFE), and 82–84 (AII). 87–88 (ST) is a (2S)-2-hydroxy-3-oxobutyl phosphate binding site. The Proton donor role is filled by His-90. Phe-115 is a 5-amino-6-(D-ribitylamino)uracil binding site. Position 129 (Arg-129) interacts with (2S)-2-hydroxy-3-oxobutyl phosphate.

The protein belongs to the DMRL synthase family.

It catalyses the reaction (2S)-2-hydroxy-3-oxobutyl phosphate + 5-amino-6-(D-ribitylamino)uracil = 6,7-dimethyl-8-(1-D-ribityl)lumazine + phosphate + 2 H2O + H(+). Its pathway is cofactor biosynthesis; riboflavin biosynthesis; riboflavin from 2-hydroxy-3-oxobutyl phosphate and 5-amino-6-(D-ribitylamino)uracil: step 1/2. Functionally, catalyzes the formation of 6,7-dimethyl-8-ribityllumazine by condensation of 5-amino-6-(D-ribitylamino)uracil with 3,4-dihydroxy-2-butanone 4-phosphate. This is the penultimate step in the biosynthesis of riboflavin. The sequence is that of 6,7-dimethyl-8-ribityllumazine synthase from Chlorobium phaeovibrioides (strain DSM 265 / 1930) (Prosthecochloris vibrioformis (strain DSM 265)).